A 355-amino-acid chain; its full sequence is UDP-N-acetylglucosamine--N-acetylmuramyl-(pentapeptide) pyrophosphoryl-undecaprenol N-acetylglucosamine transferase (355 aa).

UDP-N-acetyl-alpha-D-glucosamine contacts are provided by residues 11–13 (TGG), N123, R162, S185, I239, 258–263 (ALTVSE), and Q284.

The protein belongs to the glycosyltransferase 28 family. MurG subfamily.

It is found in the cell inner membrane. The catalysed reaction is di-trans,octa-cis-undecaprenyl diphospho-N-acetyl-alpha-D-muramoyl-L-alanyl-D-glutamyl-meso-2,6-diaminopimeloyl-D-alanyl-D-alanine + UDP-N-acetyl-alpha-D-glucosamine = di-trans,octa-cis-undecaprenyl diphospho-[N-acetyl-alpha-D-glucosaminyl-(1-&gt;4)]-N-acetyl-alpha-D-muramoyl-L-alanyl-D-glutamyl-meso-2,6-diaminopimeloyl-D-alanyl-D-alanine + UDP + H(+). It participates in cell wall biogenesis; peptidoglycan biosynthesis. In terms of biological role, cell wall formation. Catalyzes the transfer of a GlcNAc subunit on undecaprenyl-pyrophosphoryl-MurNAc-pentapeptide (lipid intermediate I) to form undecaprenyl-pyrophosphoryl-MurNAc-(pentapeptide)GlcNAc (lipid intermediate II). This chain is UDP-N-acetylglucosamine--N-acetylmuramyl-(pentapeptide) pyrophosphoryl-undecaprenol N-acetylglucosamine transferase, found in Hydrogenovibrio crunogenus (strain DSM 25203 / XCL-2) (Thiomicrospira crunogena).